We begin with the raw amino-acid sequence, 136 residues long: Probable intron-encoded DNA endonuclease 3 (136 aa).

This sequence belongs to the LAGLIDADG endonuclease family.

The protein resides in the mitochondrion. Its function is as follows. Mitochondrial DNA endonuclease involved in intron homing. This chain is Probable intron-encoded DNA endonuclease 3 (hegI3), found in Mycosarcoma maydis (Corn smut fungus).